A 723-amino-acid chain; its full sequence is Multiple organellar RNA editing factor 4, mitochondrial (723 aa).

Residues 1–64 (MAMFSHRLRR…RLFSTTQYQY (64 aa)) constitute a mitochondrion transit peptide. 3 disordered regions span residues 180 to 303 (ITPG…GQTQ), 318 to 474 (RQEM…EGQP), and 663 to 723 (QNGG…NSRI). The segment covering 191-204 (EGFDSLKKESKPEQ) has biased composition (basic and acidic residues). Composition is skewed to polar residues over residues 219 to 233 (TSGQVQGQGSLTLPD), 273 to 303 (GQWQSRGQGNSFQGSFKQSQGTLPVRKGQTQ), 327 to 365 (GQAQRSQMPSSQGTLRQGQAQGSQRPSNQVGYNQGQGAQ), and 373 to 430 (QGAQ…NYSP). Low complexity-rich tracts occupy residues 459–474 (QGQGTPLPGQGQEGQP) and 682–695 (QGFSGQGQNQTFQQ). Over residues 714-723 (TETRKPNSRI) the composition is skewed to basic and acidic residues.

Belongs to the MORF family. In terms of assembly, heterodimers with MORF8/RIP1, MORF1/RIP8 and MORF3/RIP3.

The protein localises to the mitochondrion. Involved in organellar RNA editing. Required for the processing of few RNA editing site in mitochondria. The sequence is that of Multiple organellar RNA editing factor 4, mitochondrial from Arabidopsis thaliana (Mouse-ear cress).